The primary structure comprises 323 residues: Aspartate carbamoyltransferase catalytic subunit (323 aa).

2 residues coordinate carbamoyl phosphate: Arg71 and Thr72. Lys99 serves as a coordination point for L-aspartate. Carbamoyl phosphate-binding residues include Arg121, His151, and Gln154. The L-aspartate site is built by Arg184 and Arg239. Residues Gly280 and Pro281 each contribute to the carbamoyl phosphate site.

It belongs to the aspartate/ornithine carbamoyltransferase superfamily. ATCase family. As to quaternary structure, heterododecamer (2C3:3R2) of six catalytic PyrB chains organized as two trimers (C3), and six regulatory PyrI chains organized as three dimers (R2).

The enzyme catalyses carbamoyl phosphate + L-aspartate = N-carbamoyl-L-aspartate + phosphate + H(+). It functions in the pathway pyrimidine metabolism; UMP biosynthesis via de novo pathway; (S)-dihydroorotate from bicarbonate: step 2/3. Its function is as follows. Catalyzes the condensation of carbamoyl phosphate and aspartate to form carbamoyl aspartate and inorganic phosphate, the committed step in the de novo pyrimidine nucleotide biosynthesis pathway. This is Aspartate carbamoyltransferase catalytic subunit from Cupriavidus metallidurans (strain ATCC 43123 / DSM 2839 / NBRC 102507 / CH34) (Ralstonia metallidurans).